We begin with the raw amino-acid sequence, 396 residues long: Phosphopentomutase (396 aa).

Residues Asp-14, Asp-286, His-291, Asp-327, His-328, and His-339 each coordinate Mn(2+).

The protein belongs to the phosphopentomutase family. Mn(2+) is required as a cofactor.

It localises to the cytoplasm. It catalyses the reaction 2-deoxy-alpha-D-ribose 1-phosphate = 2-deoxy-D-ribose 5-phosphate. The enzyme catalyses alpha-D-ribose 1-phosphate = D-ribose 5-phosphate. It participates in carbohydrate degradation; 2-deoxy-D-ribose 1-phosphate degradation; D-glyceraldehyde 3-phosphate and acetaldehyde from 2-deoxy-alpha-D-ribose 1-phosphate: step 1/2. In terms of biological role, isomerase that catalyzes the conversion of deoxy-ribose 1-phosphate (dRib-1-P) and ribose 1-phosphate (Rib-1-P) to deoxy-ribose 5-phosphate (dRib-5-P) and ribose 5-phosphate (Rib-5-P), respectively. The chain is Phosphopentomutase from Staphylococcus epidermidis (strain ATCC 35984 / DSM 28319 / BCRC 17069 / CCUG 31568 / BM 3577 / RP62A).